The primary structure comprises 140 residues: MAKKELAKIKLQIPAGVANPSPPVGPALGQHGLNIMQFCKEFNARTQDQKGMIIPVVITAYADRSFTFITKTPPAAVLIMKAAKIDKGSGEPNRNKVGKISIEQVEEIAKLKLPDLTAKDLDSAKRSIIGTARSMGIEIK.

Belongs to the universal ribosomal protein uL11 family. In terms of assembly, part of the ribosomal stalk of the 50S ribosomal subunit. Interacts with L10 and the large rRNA to form the base of the stalk. L10 forms an elongated spine to which L12 dimers bind in a sequential fashion forming a multimeric L10(L12)X complex. Post-translationally, one or more lysine residues are methylated.

In terms of biological role, forms part of the ribosomal stalk which helps the ribosome interact with GTP-bound translation factors. The polypeptide is Large ribosomal subunit protein uL11 (Lawsonia intracellularis (strain PHE/MN1-00)).